The following is a 171-amino-acid chain: ATP synthase subunit b (171 aa).

The chain crosses the membrane as a helical span at residues 3–23 (KFLFFIFVFVGISFAGDDTAT).

The protein belongs to the ATPase B chain family. As to quaternary structure, F-type ATPases have 2 components, F(1) - the catalytic core - and F(0) - the membrane proton channel. F(1) has five subunits: alpha(3), beta(3), gamma(1), delta(1), epsilon(1). F(0) has three main subunits: a(1), b(2) and c(10-14). The alpha and beta chains form an alternating ring which encloses part of the gamma chain. F(1) is attached to F(0) by a central stalk formed by the gamma and epsilon chains, while a peripheral stalk is formed by the delta and b chains.

The protein resides in the cell inner membrane. In terms of biological role, f(1)F(0) ATP synthase produces ATP from ADP in the presence of a proton or sodium gradient. F-type ATPases consist of two structural domains, F(1) containing the extramembraneous catalytic core and F(0) containing the membrane proton channel, linked together by a central stalk and a peripheral stalk. During catalysis, ATP synthesis in the catalytic domain of F(1) is coupled via a rotary mechanism of the central stalk subunits to proton translocation. Functionally, component of the F(0) channel, it forms part of the peripheral stalk, linking F(1) to F(0). This is ATP synthase subunit b from Campylobacter hominis (strain ATCC BAA-381 / DSM 21671 / CCUG 45161 / LMG 19568 / NCTC 13146 / CH001A).